A 317-amino-acid polypeptide reads, in one-letter code: Acetyl-coenzyme A carboxylase carboxyl transferase subunit alpha (317 aa).

The 254-residue stretch at 40–293 (LEKRSADALK…GDIIAASLRS (254 aa)) folds into the CoA carboxyltransferase C-terminal domain.

This sequence belongs to the AccA family. Acetyl-CoA carboxylase is a heterohexamer composed of biotin carboxyl carrier protein (AccB), biotin carboxylase (AccC) and two subunits each of ACCase subunit alpha (AccA) and ACCase subunit beta (AccD).

It localises to the cytoplasm. It catalyses the reaction N(6)-carboxybiotinyl-L-lysyl-[protein] + acetyl-CoA = N(6)-biotinyl-L-lysyl-[protein] + malonyl-CoA. It functions in the pathway lipid metabolism; malonyl-CoA biosynthesis; malonyl-CoA from acetyl-CoA: step 1/1. Functionally, component of the acetyl coenzyme A carboxylase (ACC) complex. First, biotin carboxylase catalyzes the carboxylation of biotin on its carrier protein (BCCP) and then the CO(2) group is transferred by the carboxyltransferase to acetyl-CoA to form malonyl-CoA. This chain is Acetyl-coenzyme A carboxylase carboxyl transferase subunit alpha, found in Brucella abortus (strain S19).